A 484-amino-acid polypeptide reads, in one-letter code: MERSEQRVRAAWDCDPGKQADRDYREDGMDLGSDAGSSSSSRASSQSNSTKVTPCSECKSSSSPGGSLDLVSALEDYEEPFPVYQKKVIDEWAPEEDGEEEEEEDDRGYRDDGCPAREPGDVSARIGSSGSGSRSAATTMPSPMPNGNLHPHDPQDLRHNGNVVVAGRPNASRVPRRPIQKTQPPGSRRGGRNRASGGLCLQPPDGGTRVPEEPPAPPMDWEALEKHLAGLQFREQEVRNQGQARTNSTSAQKNERESIRQKLALGSFFDDGPGIYTSCSKSGKPSLSARLQSGMNLQICFVNDSGSDKDSDADDSKTETSLDTPLSPMSKQSSSYSDRDTTEEESESLDDMDFLTRQKKLQAEAKMALAMAKPMAKMQVEVEKQNRKKSPVADLLPHMPHISECLMKRSLKPTDLRDMTIGQLQVIVNDLHSQIESLNEELVQLLLIRDELHTEQDAMLVDIEDLTRHAESQQKHMAEKMPAK.

The segment covering 1 to 28 (MERSEQRVRAAWDCDPGKQADRDYREDG) has biased composition (basic and acidic residues). Disordered regions lie at residues 1 to 74 (MERS…VSAL), 86 to 220 (KKVI…PPMD), 232 to 258 (QFRE…ERES), and 305 to 350 (SGSD…ESLD). Over residues 33–67 (SDAGSSSSSRASSQSNSTKVTPCSECKSSSSPGGS) the composition is skewed to low complexity. The span at 92 to 106 (WAPEEDGEEEEEEDD) shows a compositional bias: acidic residues. The span at 107–120 (RGYRDDGCPAREPG) shows a compositional bias: basic and acidic residues. Residues 123–137 (SARIGSSGSGSRSAA) are compositionally biased toward low complexity. Positions 150–159 (HPHDPQDLRH) are enriched in basic and acidic residues. Polar residues predominate over residues 239–252 (RNQGQARTNSTSAQ). Over residues 306 to 320 (GSDKDSDADDSKTET) the composition is skewed to basic and acidic residues. Polar residues predominate over residues 321-332 (SLDTPLSPMSKQ). The segment covering 341–350 (TTEEESESLD) has biased composition (acidic residues). Positions 421-455 (IGQLQVIVNDLHSQIESLNEELVQLLLIRDELHTE) form a coiled coil.

This sequence belongs to the SCHIP1 family. As to quaternary structure, homooligomer (via coiled coil domain). Interacts with NF2; the interaction is direct. Interacts with ANK3.

The sequence is that of Schwannomin-interacting protein 1 from Mus musculus (Mouse).